We begin with the raw amino-acid sequence, 342 residues long: Succinylglutamate desuccinylase (342 aa).

Histidine 63, glutamate 66, and histidine 155 together coordinate Zn(2+). Glutamate 219 is a catalytic residue.

This sequence belongs to the AspA/AstE family. Succinylglutamate desuccinylase subfamily. Zn(2+) serves as cofactor.

The enzyme catalyses N-succinyl-L-glutamate + H2O = L-glutamate + succinate. It functions in the pathway amino-acid degradation; L-arginine degradation via AST pathway; L-glutamate and succinate from L-arginine: step 5/5. In terms of biological role, transforms N(2)-succinylglutamate into succinate and glutamate. This is Succinylglutamate desuccinylase from Vibrio vulnificus (strain YJ016).